Here is a 285-residue protein sequence, read N- to C-terminus: Undecaprenyl-diphosphatase (285 aa).

The next 7 membrane-spanning stretches (helical) occupy residues 40-60 (DELL…LLYF), 92-112 (LCIL…ENFI), 122-142 (SVYA…WADA), 159-179 (FLIG…RSGI), 197-217 (FSML…LLGL), 233-253 (LIVA…LMAL), and 259-279 (FLPF…TSPI).

The protein belongs to the UppP family.

It is found in the cell inner membrane. It catalyses the reaction di-trans,octa-cis-undecaprenyl diphosphate + H2O = di-trans,octa-cis-undecaprenyl phosphate + phosphate + H(+). Functionally, catalyzes the dephosphorylation of undecaprenyl diphosphate (UPP). Confers resistance to bacitracin. This chain is Undecaprenyl-diphosphatase, found in Hyphomonas neptunium (strain ATCC 15444).